A 519-amino-acid chain; its full sequence is Galactose-1-phosphate uridylyltransferase (519 aa).

This sequence belongs to the galactose-1-phosphate uridylyltransferase type 2 family.

It localises to the cytoplasm. It catalyses the reaction alpha-D-galactose 1-phosphate + UDP-alpha-D-glucose = alpha-D-glucose 1-phosphate + UDP-alpha-D-galactose. It participates in carbohydrate metabolism; galactose metabolism. This is Galactose-1-phosphate uridylyltransferase from Caldanaerobacter subterraneus subsp. tengcongensis (strain DSM 15242 / JCM 11007 / NBRC 100824 / MB4) (Thermoanaerobacter tengcongensis).